A 195-amino-acid chain; its full sequence is Imidazoleglycerol-phosphate dehydratase (195 aa).

The protein belongs to the imidazoleglycerol-phosphate dehydratase family.

The protein localises to the cytoplasm. It catalyses the reaction D-erythro-1-(imidazol-4-yl)glycerol 3-phosphate = 3-(imidazol-4-yl)-2-oxopropyl phosphate + H2O. Its pathway is amino-acid biosynthesis; L-histidine biosynthesis; L-histidine from 5-phospho-alpha-D-ribose 1-diphosphate: step 6/9. The chain is Imidazoleglycerol-phosphate dehydratase from Frankia casuarinae (strain DSM 45818 / CECT 9043 / HFP020203 / CcI3).